A 167-amino-acid polypeptide reads, in one-letter code: NAD(P)H-quinone oxidoreductase subunit I, chloroplastic (167 aa).

4Fe-4S ferredoxin-type domains follow at residues 55 to 84 and 95 to 124; these read GRIHFEFDKCIACEVCVRVCPIDLPVVDWK and LNYSIDFGICIFCGNCVEYCPTNCLSMTEE. [4Fe-4S] cluster-binding residues include Cys-64, Cys-67, Cys-70, Cys-74, Cys-104, Cys-107, Cys-110, and Cys-114.

The protein belongs to the complex I 23 kDa subunit family. In terms of assembly, NDH is composed of at least 16 different subunits, 5 of which are encoded in the nucleus. It depends on [4Fe-4S] cluster as a cofactor.

The protein localises to the plastid. The protein resides in the chloroplast thylakoid membrane. The catalysed reaction is a plastoquinone + NADH + (n+1) H(+)(in) = a plastoquinol + NAD(+) + n H(+)(out). The enzyme catalyses a plastoquinone + NADPH + (n+1) H(+)(in) = a plastoquinol + NADP(+) + n H(+)(out). NDH shuttles electrons from NAD(P)H:plastoquinone, via FMN and iron-sulfur (Fe-S) centers, to quinones in the photosynthetic chain and possibly in a chloroplast respiratory chain. The immediate electron acceptor for the enzyme in this species is believed to be plastoquinone. Couples the redox reaction to proton translocation, and thus conserves the redox energy in a proton gradient. The sequence is that of NAD(P)H-quinone oxidoreductase subunit I, chloroplastic from Eucalyptus globulus subsp. globulus (Tasmanian blue gum).